Reading from the N-terminus, the 122-residue chain is Large ribosomal subunit protein uL14 (122 aa).

This sequence belongs to the universal ribosomal protein uL14 family. In terms of assembly, part of the 50S ribosomal subunit. Forms a cluster with proteins L3 and L19. In the 70S ribosome, L14 and L19 interact and together make contacts with the 16S rRNA in bridges B5 and B8. Can interact with ribosomal silencing factor RsfS, which may inhibit ribosomal subunit association.

In terms of biological role, binds to 23S rRNA. Forms part of two intersubunit bridges in the 70S ribosome. In Synechocystis sp. (strain ATCC 27184 / PCC 6803 / Kazusa), this protein is Large ribosomal subunit protein uL14.